Here is a 152-residue protein sequence, read N- to C-terminus: uncharacterized protein (152 aa).

Over 1–5 (MWFPQ) the chain is Cytoplasmic. The helical transmembrane segment at 6-26 (IIAGMAAGGAASAMTPGKVLF) threads the bilayer. The Extracellular segment spans residues 27–38 (TNALGLGCSRSR). Residues 39-59 (GLFLEMFGTAVLCLTVLMTAV) form a helical membrane-spanning segment. Topologically, residues 60–65 (EKRETN) are cytoplasmic. A helical membrane pass occupies residues 66-86 (FMAALPIGISLFMAHMALTGY). The Extracellular portion of the chain corresponds to 87 to 110 (TGTGVNPARSLGAAVAARYFPHYH). The NPA signature appears at 92-94 (NPA). The chain crosses the membrane as a helical span at residues 111–131 (WIYWISPLLGAFLAWSVWQLL). The Cytoplasmic portion of the chain corresponds to 132–152 (QILDYTTYVNAEKAAGQKKED).

It belongs to the MIP/aquaporin (TC 1.A.8) family.

The protein resides in the membrane. This is an uncharacterized protein from Saccharomyces cerevisiae (strain RM11-1a) (Baker's yeast).